Reading from the N-terminus, the 1425-residue chain is Neuropathy target esterase sws (1425 aa).

Residues Met-1–Thr-34 lie on the Lumenal side of the membrane. The helical transmembrane segment at Val-35–Phe-55 threads the bilayer. At Lys-56–Asn-1425 the chain is on the cytoplasmic side. Ile-174–Arg-301 is an a nucleoside 3',5'-cyclic phosphate binding site. 2 stretches are compositionally biased toward polar residues: residues Thr-332–Ala-348 and Ser-357–Val-366. Positions Thr-332–Thr-410 are disordered. A compositionally biased stretch (low complexity) spans Ser-367–Pro-381. 2 positions are modified to phosphoserine: Ser-444 and Ser-453. A nucleoside 3',5'-cyclic phosphate is bound by residues Glu-482–Arg-609 and Ile-598–Leu-727. One can recognise a PNPLA domain in the interval Leu-952–His-1118. The short motif at Gly-956 to Gly-961 is the GXGXXG element. The GXSXG signature appears at Gly-983–Gly-987. Ser-985 functions as the Nucleophile in the catalytic mechanism. The active-site Proton acceptor is the Asp-1105. The DGA/G motif lies at Asp-1105–Gly-1107. Ser-1160 is modified (phosphoserine). The disordered stretch occupies residues Leu-1330–Asn-1425. The span at Ser-1337–Arg-1347 shows a compositional bias: low complexity. The span at Ser-1348 to His-1358 shows a compositional bias: basic and acidic residues. Over residues Thr-1380–Gln-1403 the composition is skewed to low complexity. Basic and acidic residues predominate over residues Leu-1404 to Arg-1416.

The protein belongs to the NTE family. As to quaternary structure, interacts with Pka-C3; interaction inhibits the catalytic function of Pka-C3 and the esterase activity of sws. As to expression, isoform A and isoform B are expressed in the entire brain cortex; cortical cell bodies of adult brain. Sws and Pka-C3 are colocalized in all neurons.

It localises to the endoplasmic reticulum membrane. It carries out the reaction a 1-acyl-sn-glycero-3-phosphocholine + H2O = sn-glycerol 3-phosphocholine + a fatty acid + H(+). Functionally, phospholipase B that deacylates intracellular phosphatidylcholine (PtdCho), generating glycerophosphocholine (GroPtdCho). This deacylation occurs at both sn-2 and sn-1 positions of PtdCho. Its specific chemical modification by certain organophosphorus (OP) compounds leads to distal axonopathy. Plays a role in the signaling mechanism between neurons and glia that regulates glia wrapping during development of the adult brain. Essential for membrane lipid homeostasis and cell survival in both neurons and glia of the adult brain. The protein is Neuropathy target esterase sws (sws) of Drosophila melanogaster (Fruit fly).